The sequence spans 36 residues: Conotoxin Cal6.1h (36 aa).

A propeptide spanning residues 1–7 is cleaved from the precursor; that stretch reads GLGRPSR. Disulfide bonds link C9–C25, C16–C29, and C24–C34.

Belongs to the conotoxin O1 superfamily. Expressed by the venom duct.

Its subcellular location is the secreted. In terms of biological role, probable neurotoxin with unknown target. Possibly targets ion channels. The protein is Conotoxin Cal6.1h of Californiconus californicus (California cone).